Here is a 276-residue protein sequence, read N- to C-terminus: Sec-independent protein translocase protein TatC (276 aa).

Positions 1–29 (MVSLTSVPPYADATPDTRASSGPAPGRRK) are disordered. 6 consecutive transmembrane segments (helical) span residues 49–69 (GGLVVGAVVGWLLYDPLLVLL), 103–123 (LFLAVMVTCPWWLYQVWAFVT), 136–156 (GFLGAAVPLFLGGAGLSWWVL), 187–207 (LVLAFGVAFVAPVLLVALNLA), 221–241 (WAVLLAFVFAAVMTPTPDALT), and 242–262 (MVLVAAPICALYFGALGVAVW).

It belongs to the TatC family. As to quaternary structure, the Tat system comprises two distinct complexes: a TatABC complex, containing multiple copies of TatA, TatB and TatC subunits, and a separate TatA complex, containing only TatA subunits. Substrates initially bind to the TatABC complex, which probably triggers association of the separate TatA complex to form the active translocon.

Its subcellular location is the cell membrane. Functionally, part of the twin-arginine translocation (Tat) system that transports large folded proteins containing a characteristic twin-arginine motif in their signal peptide across membranes. Together with TatB, TatC is part of a receptor directly interacting with Tat signal peptides. In Xylanimonas cellulosilytica (strain DSM 15894 / JCM 12276 / CECT 5975 / KCTC 9989 / LMG 20990 / NBRC 107835 / XIL07), this protein is Sec-independent protein translocase protein TatC.